Consider the following 411-residue polypeptide: LIM domain-binding protein 1 (411 aa).

An N-acetylserine modification is found at Ser-2. At Thr-61 the chain carries Phosphothreonine. A phosphoserine mark is found at Ser-265 and Ser-302. Disordered stretches follow at residues 284–330 and 367–411; these read PPAE…TFAL and DAAN…QASQ. Residues 302–318 show a composition bias toward low complexity; the sequence is SGGSTMSSGGGNTNNSN. The 40-residue stretch at 336–375 folds into the LIM interaction domain (LID) domain; sequence DVMVVGEPTLMGGEFGDEDERLITRLENTQFDAANGIDDE.

It belongs to the LDB family. As to quaternary structure, interacts with ESR1. Forms homodimers and heterodimers. Interacts with and activates LHX1/LIM1. Interacts with the LIM domains of ISL1 and LMO2. Can assemble in a complex with LMO2 and TAL1/SCL but does not interact with TAL1/SCL directly. Strongly interacts with the LIM2 domain of LMX1A and more weakly with the LIM1 domain. Homodimerization is not required for, and does not effect, LMX1A-binding. Component of a nuclear TAL-1 complex composed at least of CBFA2T3, LDB1, TAL1 and TCF3. Interacts with LHX6 and LHX9. At neuronal promoters, forms a complex with LHX3 involved in the specification of interneurons, in motor neurons, it is displaced by ISL1 to form a ternary complex in which ISL1 contacts both LHX3 and LDB1. Interacts with SLK; leading to negatively regulate SLK kinase activity. Interacts with YWHAZ. Interacts with PRDM1/BLIMP1. Interacts with LMO4. Interacts with RLIM/RNF12; the interaction inhibits the ubiquitination of LMO proteins. Post-translationally, ubiquitinated by RLIM/RNF12, leading to its degradation by the proteasome. Expressed in multiple adult tissues including heart, brain, liver, kidney, testis, lung and muscle, with expression highest in the pituitary gland and skin.

It localises to the nucleus. Its function is as follows. Binds to the LIM domain of a wide variety of LIM domain-containing transcription factors. May regulate the transcriptional activity of LIM-containing proteins by determining specific partner interactions. Plays a role in the development of interneurons and motor neurons in cooperation with LHX3 and ISL1. Acts synergistically with LHX1/LIM1 in axis formation and activation of gene expression. Acts with LMO2 in the regulation of red blood cell development, maintaining erythroid precursors in an immature state. The chain is LIM domain-binding protein 1 (Ldb1) from Mus musculus (Mouse).